The sequence spans 308 residues: Protein translocase subunit SecF (308 aa).

6 helical membrane-spanning segments follow: residues Val23–Tyr42, Ile140–Val160, Trp164–Phe184, Leu194–Ile214, Ile246–Ala266, and Val272–Ile292.

Belongs to the SecD/SecF family. SecF subfamily. As to quaternary structure, forms a complex with SecD. Part of the essential Sec protein translocation apparatus which comprises SecA, SecYEG and auxiliary proteins SecDF-YajC and YidC.

It is found in the cell inner membrane. Part of the Sec protein translocase complex. Interacts with the SecYEG preprotein conducting channel. SecDF uses the proton motive force (PMF) to complete protein translocation after the ATP-dependent function of SecA. This chain is Protein translocase subunit SecF, found in Rickettsia typhi (strain ATCC VR-144 / Wilmington).